The chain runs to 287 residues: ATP synthase gamma chain (287 aa).

The protein belongs to the ATPase gamma chain family. F-type ATPases have 2 components, CF(1) - the catalytic core - and CF(0) - the membrane proton channel. CF(1) has five subunits: alpha(3), beta(3), gamma(1), delta(1), epsilon(1). CF(0) has three main subunits: a, b and c.

It is found in the cell inner membrane. In terms of biological role, produces ATP from ADP in the presence of a proton gradient across the membrane. The gamma chain is believed to be important in regulating ATPase activity and the flow of protons through the CF(0) complex. This is ATP synthase gamma chain from Edwardsiella ictaluri (strain 93-146).